We begin with the raw amino-acid sequence, 507 residues long: Cell cycle serine/threonine-protein kinase hsk1 (507 aa).

Ser-22 is subject to Phosphoserine. Residues 68-433 (YRLIEKIGEG…AEEALDHDFL (366 aa)) form the Protein kinase domain. Residues 74 to 82 (IGEGTFSSV) and Lys-129 contribute to the ATP site. The active-site Proton acceptor is Asp-216. Thr-291 is subject to Phosphothreonine. The interval 475-507 (FKEQEETDEPTSLSKRKRSIDEILPNDALQDGA) is disordered. Ser-493 bears the Phosphoserine mark.

It belongs to the protein kinase superfamily. Ser/Thr protein kinase family. CDC7 subfamily. In terms of assembly, heterodimer with the regulatory subunit him1/dfp1. May form homooligomeric complexes. Interacts with mcm10. Post-translationally, autophosphorylated. Phosphorylated by cds1 in vitro.

The protein resides in the nucleus. It catalyses the reaction L-seryl-[protein] + ATP = O-phospho-L-seryl-[protein] + ADP + H(+). The catalysed reaction is L-threonyl-[protein] + ATP = O-phospho-L-threonyl-[protein] + ADP + H(+). Its activity is regulated as follows. Phosphorylation of exogenous substrates activated by Dfp1. In terms of biological role, required for G1/S transition. Plays a role in DNA replication checkpoint signaling through regulating rad3 and cds1. Involved in the maintenance of mitotic chromosome structures during S phase through regulating the function of rad21. Required for initiation of mitotic DNA replication through phosphorylating mcm2/cdc19. Required for genome integrity. The sequence is that of Cell cycle serine/threonine-protein kinase hsk1 (hsk1) from Schizosaccharomyces pombe (strain 972 / ATCC 24843) (Fission yeast).